A 623-amino-acid chain; its full sequence is Chaperone protein HtpG (623 aa).

An a; substrate-binding region spans residues 1–330 (MIMTQEKKKF…SEDLPLNISR (330 aa)). Residues 331–546 (ESLQHNSVLE…DAAMDIRMER (216 aa)) are b. The tract at residues 477–497 (SDIDVEQTTSQSEEKNTDSKK) is disordered. The segment covering 488–497 (SEEKNTDSKK) has biased composition (basic and acidic residues). Positions 547 to 623 (FLIEQKQIAN…LNDIVQKAIL (77 aa)) are c.

Belongs to the heat shock protein 90 family. In terms of assembly, homodimer.

It localises to the cytoplasm. Its function is as follows. Molecular chaperone. Has ATPase activity. The chain is Chaperone protein HtpG from Rickettsia massiliae (strain Mtu5).